The primary structure comprises 101 residues: uncharacterized protein (101 aa).

A signal peptide spans 1–23; the sequence is MERRTGVVLIIFVTFCEAMMARA. A helical transmembrane segment spans residues 38–58; sequence FLLFIIHTSCTMVAFIIGNLA.

The protein resides in the host membrane. This is an uncharacterized protein from Cryphonectria parasitica (Chestnut blight fungus).